The primary structure comprises 138 residues: Acidic phospholipase A2 Tbo-E6 (138 aa).

Positions methionine 1–glycine 16 are cleaved as a signal peptide. Intrachain disulfides connect cysteine 42/cysteine 131, cysteine 44/cysteine 60, cysteine 59/cysteine 111, cysteine 65/cysteine 138, cysteine 66/cysteine 104, cysteine 73/cysteine 97, and cysteine 91/cysteine 102. Ca(2+) contacts are provided by tyrosine 43, glycine 45, and glycine 47. The active site involves histidine 63. Aspartate 64 serves as a coordination point for Ca(2+). The active site involves aspartate 105.

In terms of assembly, monomer. The cofactor is Ca(2+). As to expression, expressed by the venom gland.

Its subcellular location is the secreted. It carries out the reaction a 1,2-diacyl-sn-glycero-3-phosphocholine + H2O = a 1-acyl-sn-glycero-3-phosphocholine + a fatty acid + H(+). Snake venom phospholipase A2 (PLA2) that impairs hemostasis. It weakly inhibits ADP-induced platelet aggregation when tested on platelet rich plasma from human and rabbit blood (15-25% of inhibition at 5-10 ug of enzyme), and dose-dependently inhibits blood coagulation, possibly by inhibiting thrombin activation. Exhibits high hydrolytic activities toward L-dipalmitoyl phosphatidylcholine. PLA2 catalyzes the calcium-dependent hydrolysis of the 2-acyl groups in 3-sn-phosphoglycerides. This Craspedocephalus borneensis (Borneo pit viper) protein is Acidic phospholipase A2 Tbo-E6.